A 443-amino-acid chain; its full sequence is Xaa-Pro dipeptidase (443 aa).

Mn(2+) contacts are provided by D246, D257, H339, E384, and E423.

This sequence belongs to the peptidase M24B family. Bacterial-type prolidase subfamily. The cofactor is Mn(2+).

The catalysed reaction is Xaa-L-Pro dipeptide + H2O = an L-alpha-amino acid + L-proline. Its function is as follows. Splits dipeptides with a prolyl residue in the C-terminal position. This is Xaa-Pro dipeptidase from Escherichia coli O157:H7.